A 279-amino-acid chain; its full sequence is Methyltransferase ausD (279 aa).

S-adenosyl-L-methionine contacts are provided by residues 124-125 (DI) and 152-153 (DV).

This sequence belongs to the class I-like SAM-binding methyltransferase superfamily. In terms of assembly, homodimer.

It participates in secondary metabolite biosynthesis; terpenoid biosynthesis. Its function is as follows. Methyltransferase; part of the gene cluster A that mediates the biosynthesis of the fungal meroterpenoid acetoxydehydroaustin. The first step of the pathway is the synthesis of 3,5-dimethylorsellinic acid by the polyketide synthase ausA. 3,5-dimethylorsellinic acid is then prenylated by the polyprenyl transferase ausN. Further epoxidation by the FAD-dependent monooxygenase ausM and cyclization by the probable terpene cyclase ausL lead to the formation of protoaustinoid A. Protoaustinoid A is then oxidized to spiro-lactone preaustinoid A3 by the combined action of the FAD-binding monooxygenases ausB and ausC, and the dioxygenase ausE. Acid-catalyzed keto-rearrangement and ring contraction of the tetraketide portion of preaustinoid A3 by ausJ lead to the formation of preaustinoid A4. The aldo-keto reductase ausK, with the help of ausH, is involved in the next step by transforming preaustinoid A4 into isoaustinone which is in turn hydroxylated by the P450 monooxygenase ausI to form austinolide. The cytochrome P450 monooxygenase ausG then modifies austinolide to austinol. Austinol is further acetylated to austin by the O-acetyltransferase ausP, which spontaneously changes to dehydroaustin. The cytochrome P450 monooxygenase then converts dehydroaustin is into 7-dehydrodehydroaustin. The hydroxylation catalyzed by ausR permits the second O-acetyltransferase ausQ to add an additional acetyl group to the molecule, leading to the formation of acetoxydehydroaustin. Due to genetic rearrangements of the clusters and the subsequent loss of some enzymes, the end product of the Penicillium brasilianum austinoid biosynthesis clusters is acetoxydehydroaustin. The polypeptide is Methyltransferase ausD (Penicillium brasilianum).